The following is a 45-amino-acid chain: Metallothionein-like protein 1A (45 aa).

The protein belongs to the metallothionein superfamily. Type 15 family. Expressed in phloem and mesophyll cells of leaves, vascular tissues of cotyledons, sepals and petals. Expressed in anthers. Expressed in root endodermis and at lower levels in cortex of mature region of roots.

Its function is as follows. Metallothioneins have a high content of cysteine residues that bind various heavy metals. Functions as a metal chelator of copper (Cu) and zinc (Zn). Plays a role in Cu homeostasis in the roots under elevated Cu concentration. Functions cooperatively with the phytochelatin synthase PCS1 to protect plants from Cu and cadmium (Cd) toxicity. Plays a role in Cu homeostasis, specifically in the remobilization of Cu from senescing leaves. The mobilization of Cu from internal sources is important for seed development. Confers tolerance to Cd and plays a role in Cd and Zn homeostasis. This is Metallothionein-like protein 1A (MT1A) from Arabidopsis thaliana (Mouse-ear cress).